A 74-amino-acid chain; its full sequence is Translational regulator CsrA (74 aa).

Belongs to the CsrA/RsmA family. As to quaternary structure, homodimer. The beta-strands of each monomer intercalate to form a hydrophobic core while the alpha-helices form wings that extend away from the core. Two molecules of FliW interact with 1 homodimer. mRNA and FliW bind to different sites on CsrA.

The protein resides in the cytoplasm. A translational regulator that binds mRNA to regulate translation initiation and/or mRNA stability. Usually binds in the 5'-UTR at or near the Shine-Dalgarno sequence preventing ribosome-binding, thus repressing translation. Represses expression of flagellin (hag) in a post-transcriptional fashion. Specifically binds to 2 sites in the 5'-UTR of hag mRNA in a cooperative fashion; the second site overlaps the Shine-Dalgarno sequence and prevents 30S ribosomal subunit binding. Mutation of either binding site abolishes CsrA regulation of hag expression. Repression is greater in the 1A96 than 168 genetic background and higher in minimal than rich medium. Translation repression is antagonized by FliW. Partner switching by flagellin between FliW and CsrA provides a flagellar assembly checkpoint to tightly control the timing of flagellin synthesis. Flagellin binds to assembly factor FliW, freeing CsrA to repress translation of the flagellin mRNA. When the flagellar hook is assembled flagellin is secreted, depleting intracellular flagellin, which frees FliW to interact with CsrA and inhibits CsrA binding to mRNA. This derepresses flagellin translation and provides protein for flagellar assembly. Once the flagellar filament is completed cytoplasmic flagellin levels rise and CsrA translation repression of flagellin reinitiates. Overexpression leads to a dramatic reduction in motility, a significant reduction in flagellin synthesis and reduced flagella assembly. In Bacillus subtilis (strain 168), this protein is Translational regulator CsrA.